The chain runs to 137 residues: Large ribosomal subunit protein uL16 (137 aa).

Belongs to the universal ribosomal protein uL16 family. As to quaternary structure, part of the 50S ribosomal subunit.

In terms of biological role, binds 23S rRNA and is also seen to make contacts with the A and possibly P site tRNAs. The chain is Large ribosomal subunit protein uL16 from Pseudomonas entomophila (strain L48).